A 342-amino-acid chain; its full sequence is tRNA-specific 2-thiouridylase MnmA (342 aa).

ATP contacts are provided by residues 6-13 (LLSGGVDS) and leucine 32. Residue cysteine 92 is the Nucleophile of the active site. Residues cysteine 92 and cysteine 191 are joined by a disulfide bond. Glycine 116 provides a ligand contact to ATP. Positions 138–140 (KDQ) are interaction with tRNA. Residue cysteine 191 is the Cysteine persulfide intermediate of the active site. The interval 293 to 294 (RY) is interaction with tRNA.

The protein belongs to the MnmA/TRMU family.

The protein localises to the cytoplasm. The enzyme catalyses S-sulfanyl-L-cysteinyl-[protein] + uridine(34) in tRNA + AH2 + ATP = 2-thiouridine(34) in tRNA + L-cysteinyl-[protein] + A + AMP + diphosphate + H(+). In terms of biological role, catalyzes the 2-thiolation of uridine at the wobble position (U34) of tRNA, leading to the formation of s(2)U34. In Helicobacter pylori (strain G27), this protein is tRNA-specific 2-thiouridylase MnmA.